The sequence spans 288 residues: 4-hydroxybenzoate octaprenyltransferase (288 aa).

8 helical membrane passes run 23 to 43 (IGSLLLLWPTLWALWLAGRGI), 46 to 66 (AKILVVFVLGVFFMRAAGCVV), 98 to 118 (ILFVVLILLSFGLVLTLNSMT), 141 to 161 (LPQVVLGAAFGWSIPMGFAAV), 163 to 183 (ESLPLVCWLLLLANICWTVAY), 213 to 233 (LIIGLLQLATLLLMVAIGWLM), 234 to 254 (NLGGAFYWSILLAGALFTHQQ), and 268 to 288 (AFLNNNYVGLILFLGILISYW).

The protein belongs to the UbiA prenyltransferase family. The cofactor is Mg(2+).

It localises to the cell inner membrane. The enzyme catalyses all-trans-octaprenyl diphosphate + 4-hydroxybenzoate = 4-hydroxy-3-(all-trans-octaprenyl)benzoate + diphosphate. Its pathway is cofactor biosynthesis; ubiquinone biosynthesis. Functionally, catalyzes the prenylation of para-hydroxybenzoate (PHB) with an all-trans polyprenyl group. Mediates the second step in the final reaction sequence of ubiquinone-8 (UQ-8) biosynthesis, which is the condensation of the polyisoprenoid side chain with PHB, generating the first membrane-bound Q intermediate 3-octaprenyl-4-hydroxybenzoate. This chain is 4-hydroxybenzoate octaprenyltransferase, found in Yersinia pseudotuberculosis serotype O:1b (strain IP 31758).